Here is a 460-residue protein sequence, read N- to C-terminus: tRNA hydroxylation protein P (460 aa).

Belongs to the peptidase U32 family.

In terms of biological role, involved in prephenate-dependent formation of 5-hydroxyuridine (ho5U) modification at position 34 in tRNAs, the first step in 5-carboxymethoxyuridine (cmo5U) biosynthesis. The sequence is that of tRNA hydroxylation protein P from Haemophilus influenzae (strain ATCC 51907 / DSM 11121 / KW20 / Rd).